The sequence spans 61 residues: Peroxidase 1 (61 aa).

The disordered stretch occupies residues 1-32 (DNTAKEKDSPANLSLRTCAAGDNAEQPLDPSR). A glycan (N-linked (GlcNAc...) asparagine) is linked at Asn12. Ca(2+) is bound by residues Asp29, Ser31, and Asp36.

This sequence belongs to the peroxidase family. Classical plant (class III) peroxidase subfamily. It depends on Ca(2+) as a cofactor. The cofactor is heme b.

The protein localises to the secreted. The enzyme catalyses 2 a phenolic donor + H2O2 = 2 a phenolic radical donor + 2 H2O. Removal of H(2)O(2), oxidation of toxic reductants, biosynthesis and degradation of lignin, suberization, auxin catabolism, response to environmental stresses such as wounding, pathogen attack and oxidative stress. These functions might be dependent on each isozyme/isoform in each plant tissue. The sequence is that of Peroxidase 1 from Vitis rotundifolia (Muscadine grape).